Here is a 117-residue protein sequence, read N- to C-terminus: uncharacterized protein (117 aa).

Transmembrane regions (helical) follow at residues alanine 43 to leucine 63 and alanine 73 to valine 93.

The protein resides in the cell membrane. This is an uncharacterized protein from Bacillus subtilis (strain 168).